Consider the following 325-residue polypeptide: Release factor glutamine methyltransferase (325 aa).

Residues Gly-141–Gly-145, Asp-164, Trp-193, and Asn-207 contribute to the S-adenosyl-L-methionine site. Asn-207 to Tyr-210 contributes to the substrate binding site. Residues Leu-306 to Ala-325 form a disordered region.

It belongs to the protein N5-glutamine methyltransferase family. PrmC subfamily.

The catalysed reaction is L-glutaminyl-[peptide chain release factor] + S-adenosyl-L-methionine = N(5)-methyl-L-glutaminyl-[peptide chain release factor] + S-adenosyl-L-homocysteine + H(+). Its function is as follows. Methylates the class 1 translation termination release factors RF1/PrfA and RF2/PrfB on the glutamine residue of the universally conserved GGQ motif. In Rhodospirillum rubrum (strain ATCC 11170 / ATH 1.1.1 / DSM 467 / LMG 4362 / NCIMB 8255 / S1), this protein is Release factor glutamine methyltransferase.